Reading from the N-terminus, the 479-residue chain is 5-hydroxytryptamine receptor 2B (479 aa).

Residues 1 to 55 lie on the Extracellular side of the membrane; that stretch reads MASSYKMSEQSTISEHILQKTCDHLILTDRSGLKAESAAEEMKQTAENQGNTVHW. A helical membrane pass occupies residues 56–78; that stretch reads AALLIFAVIIPTIGGNILVILAV. Residues 79 to 89 lie on the Cytoplasmic side of the membrane; it reads SLEKRLQYATN. A helical membrane pass occupies residues 90–112; it reads YFLMSLAVADLLVGLFVMPIALL. At 113–128 the chain is on the extracellular side; that stretch reads TIMFEATWPLPLALCP. Cys-127 and Cys-206 are oxidised to a cystine. The chain crosses the membrane as a helical span at residues 129 to 150; the sequence is AWLFLDVLFSTASIMHLCAISL. Residues Asp-134 and Thr-139 each contribute to the ergotamine site. The DRY motif; important for ligand-induced conformation changes motif lies at 151–153; that stretch reads DRY. At 151–170 the chain is on the cytoplasmic side; it reads DRYIAIKKPIQANQCNSRTT. The helical transmembrane segment at 171 to 191 threads the bilayer; that stretch reads AFVKITVVWLISIGIAIPVPI. At 192-215 the chain is on the extracellular side; sequence KGIEADVVNAHNITCELTKDRFGS. An N-linked (GlcNAc...) asparagine glycan is attached at Asn-203. Residue Leu-208 coordinates ergotamine. A [DE]RFG motif; may stabilize a conformation that preferentially activates signaling via beta-arrestin family members motif is present at residues 211–214; that stretch reads DRFG. Residues 216–238 form a helical membrane-spanning segment; sequence FMLFGSLAAFFAPLTIMIVTYFL. The Cytoplasmic portion of the chain corresponds to 239–323; sequence TIHALRKKAY…TISNEQRASK (85 aa). The chain crosses the membrane as a helical span at residues 324–344; the sequence is VLGIVFLFFLLMWCPFFITNV. The Extracellular segment spans residues 345 to 359; sequence TLALCDSCNQTTLKT. The cysteines at positions 349 and 352 are disulfide-linked. N-linked (GlcNAc...) asparagine glycosylation is present at Asn-353. The helical transmembrane segment at 360–381 threads the bilayer; that stretch reads LLQIFVWVGYVSSGVNPLIYTL. The short motif at 375 to 379 is the NPxxY motif; important for ligand-induced conformation changes and signaling element; it reads NPLIY. Over 382–479 the chain is Cytoplasmic; sequence FNKTFREAFG…DKVEDQVSYI (98 aa). Cys-396 is lipidated: S-palmitoyl cysteine. The short motif at 477-479 is the PDZ-binding element; that stretch reads SYI.

This sequence belongs to the G-protein coupled receptor 1 family. As to quaternary structure, interacts (via C-terminus) with MPDZ. As to expression, stomach fundus.

It is found in the cell membrane. The protein resides in the synapse. It localises to the synaptosome. Its function is as follows. G-protein coupled receptor for 5-hydroxytryptamine (serotonin). Also functions as a receptor for various ergot alkaloid derivatives and psychoactive substances. Ligand binding causes a conformation change that triggers signaling via guanine nucleotide-binding proteins (G proteins) and modulates the activity of downstream effectors. HTR2B is coupled to G(q)/G(11) G alpha proteins and activates phospholipase C-beta, releasing diacylglycerol (DAG) and inositol 1,4,5-trisphosphate (IP3) second messengers that modulate the activity of phosphatidylinositol 3-kinase and promote the release of Ca(2+) ions from intracellular stores, respectively. Beta-arrestin family members inhibit signaling via G proteins and mediate activation of alternative signaling pathways. Plays a role in the regulation of dopamine and 5-hydroxytryptamine release, 5-hydroxytryptamine uptake and in the regulation of extracellular dopamine and 5-hydroxytryptamine levels, and thereby affects neural activity. May play a role in the perception of pain. Plays a role in the regulation of behavior, including impulsive behavior. Required for normal proliferation of embryonic cardiac myocytes and normal heart development. Protects cardiomyocytes against apoptosis. Plays a role in the adaptation of pulmonary arteries to chronic hypoxia. Plays a role in vasoconstriction. Required for normal osteoblast function and proliferation, and for maintaining normal bone density. Required for normal proliferation of the interstitial cells of Cajal in the intestine. The protein is 5-hydroxytryptamine receptor 2B (Htr2b) of Rattus norvegicus (Rat).